A 169-amino-acid polypeptide reads, in one-letter code: Crossover junction endodeoxyribonuclease RuvC (169 aa).

Residues Asp-11, Glu-71, and Asp-143 contribute to the active site. Mg(2+) is bound by residues Asp-11, Glu-71, and Asp-143.

This sequence belongs to the RuvC family. Homodimer which binds Holliday junction (HJ) DNA. The HJ becomes 2-fold symmetrical on binding to RuvC with unstacked arms; it has a different conformation from HJ DNA in complex with RuvA. In the full resolvosome a probable DNA-RuvA(4)-RuvB(12)-RuvC(2) complex forms which resolves the HJ. Mg(2+) is required as a cofactor.

The protein resides in the cytoplasm. It carries out the reaction Endonucleolytic cleavage at a junction such as a reciprocal single-stranded crossover between two homologous DNA duplexes (Holliday junction).. In terms of biological role, the RuvA-RuvB-RuvC complex processes Holliday junction (HJ) DNA during genetic recombination and DNA repair. Endonuclease that resolves HJ intermediates. Cleaves cruciform DNA by making single-stranded nicks across the HJ at symmetrical positions within the homologous arms, yielding a 5'-phosphate and a 3'-hydroxyl group; requires a central core of homology in the junction. The consensus cleavage sequence is 5'-(A/T)TT(C/G)-3'. Cleavage occurs on the 3'-side of the TT dinucleotide at the point of strand exchange. HJ branch migration catalyzed by RuvA-RuvB allows RuvC to scan DNA until it finds its consensus sequence, where it cleaves and resolves the cruciform DNA. This is Crossover junction endodeoxyribonuclease RuvC from Rhizobium leguminosarum bv. trifolii (strain WSM2304).